The following is a 343-amino-acid chain: Nuclear distribution protein nudE-like 1 (343 aa).

Residues 25-190 (KYKQSFQEAR…LAVRERQQEV (166 aa)) adopt a coiled-coil conformation. Disordered regions lie at residues 184–204 (RERQ…LDCE) and 322–343 (QGTP…PLSV).

It belongs to the nudE family. In terms of processing, phosphorylated in mitosis.

Its subcellular location is the cytoplasm. The protein resides in the cytoskeleton. It localises to the microtubule organizing center. The protein localises to the centrosome. It is found in the spindle. Functionally, required for organization of the cellular microtubule array and microtubule anchoring at the centrosome. Positively regulates the activity of the minus-end directed microtubule motor protein dynein. May enhance dynein-mediated microtubule sliding by targeting dynein to the microtubule plus end. Positively regulates lysosome peripheral distribution and ruffled border formation in osteoclasts. This Gallus gallus (Chicken) protein is Nuclear distribution protein nudE-like 1 (NDEL1).